The following is a 329-amino-acid chain: Malate dehydrogenase (329 aa).

NAD(+) is bound at residue 12-18; it reads GAAGQIG. Substrate contacts are provided by arginine 93 and arginine 99. NAD(+) contacts are provided by residues asparagine 106, glutamine 113, and 130–132; that span reads VGN. Substrate contacts are provided by asparagine 132 and arginine 163. Histidine 188 functions as the Proton acceptor in the catalytic mechanism.

It belongs to the LDH/MDH superfamily. MDH type 2 family.

It catalyses the reaction (S)-malate + NAD(+) = oxaloacetate + NADH + H(+). Functionally, catalyzes the reversible oxidation of malate to oxaloacetate. In Frankia casuarinae (strain DSM 45818 / CECT 9043 / HFP020203 / CcI3), this protein is Malate dehydrogenase.